The sequence spans 1002 residues: TOG array regulator of axonemal microtubules protein 2 (1002 aa).

Disordered stretches follow at residues 54 to 74 (SSVL…EDQS), 131 to 214 (KRRL…SAQE), 332 to 351 (ETRS…KVQV), 402 to 421 (PLRG…PRRN), and 426 to 450 (LQRK…GFAR).

Belongs to the Crescerin family.

The protein is TOG array regulator of axonemal microtubules protein 2 (Togaram2) of Mus musculus (Mouse).